The primary structure comprises 259 residues: Eukaryotic translation initiation factor 4E1 (259 aa).

The tract at residues 1 to 70 is disordered; the sequence is MQSDFHRMKN…TATTTAPAGD (70 aa). Over residues 18-27 the composition is skewed to polar residues; the sequence is FKTSAPSTEQ. Basic and acidic residues predominate over residues 41–51; that stretch reads EAKDVKPKEDP. Positions 54 to 70 are enriched in low complexity; that stretch reads TGEPAGNTATTTAPAGD. Residues 100 to 101, 146 to 147, and 199 to 204 each bind mRNA; these read WE and RGKSNK.

The protein belongs to the eukaryotic initiation factor 4E family. As to quaternary structure, eIF4F is a multi-subunit complex, the composition of which varies with external and internal environmental conditions. It is composed of at least eIF4A, eIF4E1 and eIF4G1. Recruited by cup in oocytes and in early embryos, preventing the interaction with eIF4G. The interaction with cup therefore prevents the translation of key transcripts such as oskar (osk) and nanos (nos) in some regions in the early embryo. Interacts with mxt. Interacts with 4E-T and Thor. Forms a RNP containing at least me31B, eIF4E1, cup, tral and pAbp; this interaction is required for the translational silencing of maternal mRNAs during the maternal-to-zygotic transition. Post-translationally, phosphorylation increases the ability of the protein to bind to mRNA caps and to form the eIF4F complex. As to expression, expressed at the posterior end of developing oocytes (at protein level). Preferential expression in the pole cells, at different developmental stages.

Its subcellular location is the cytoplasm. It localises to the cytoplasmic ribonucleoprotein granule. The protein resides in the nucleus. It is found in the nuclear body. In terms of biological role, recognizes and binds the 7-methylguanosine (m7G)-containing mRNA cap during an early step in the initiation of protein synthesis and facilitates ribosome binding by inducing the unwinding of the mRNAs secondary structures. In 0-1 hour embryos, forms a complex with me31B, cup, tral and pAbp which binds to various mRNAs including maternal mRNAs, and down-regulates their expression during the maternal-to-zygotic transition. The protein is Eukaryotic translation initiation factor 4E1 of Drosophila melanogaster (Fruit fly).